A 658-amino-acid chain; its full sequence is MTQLTTGKATPHGATYDGHGVNFTLFSAHAERVELCVFDAQGNEVRFDLPGRSGDVWHGYLADARPGLRYGYRVHGPWQPAAGHRFNPAKLLIDPCARRVEGDLHDNPLFHAGYETPDSRDNATIAPKCVVVSDSYNWEDDAPPRTPWGNTVIYEAHVKGLTYQHPEIPAEIRGRYKALGHPVMINYFKRLGITALELMPVIHFASEPRLQRLGLTNYWGYNPMAMFALHPVYACSPESALDEFRDAVKELHKAGIEVILDIVINHSAELDLDGPMFSLRGIDNRSYYWIKEDGDYHNWTGCGNTLNLSNPGVMEYALECLRYWVETCHVDGFRFDLASVMGRTPAFRQDAPLFTAIQNCPVLSQVKLIAEPWDIGEGGYQVGNFPPLFAEWNDHFRDATRRFWLQRNLSLGDFAGRFAGSSDVFNRNGRLPGASINLVTAHDGFTLRDCVCFTNKHNEANGEENRDGSNNNHSNNHGKEGLGGSLDLIERRRDSVHALLTTLLLSQGTPMLLAGDEHGHSQHGNNNAYCQDNALTWLDWERANNGLTDFTAALIHLRQQIPALTRNQWWQENDGNVRWLNKDGQVLSVEEWQHGMTCMQIMLSDRWLIALNATPHLVDIVLPEGEWRAIPPFAGEDNPVVLEVWHGSAHGLCVFQKS.

Asp-336 serves as the catalytic Nucleophile. Residue Glu-371 is the Proton donor of the active site. The tract at residues Ala-460–Gly-484 is disordered.

Belongs to the glycosyl hydrolase 13 family.

The enzyme catalyses Hydrolysis of (1-&gt;6)-alpha-D-glucosidic linkages to branches with degrees of polymerization of three or four glucose residues in limit dextrin.. The protein operates within glycan degradation; glycogen degradation. Removes maltotriose and maltotetraose chains that are attached by 1,6-alpha-linkage to the limit dextrin main chain, generating a debranched limit dextrin. This chain is Glycogen debranching enzyme, found in Escherichia fergusonii (strain ATCC 35469 / DSM 13698 / CCUG 18766 / IAM 14443 / JCM 21226 / LMG 7866 / NBRC 102419 / NCTC 12128 / CDC 0568-73).